A 1049-amino-acid chain; its full sequence is Retinoblastoma-like protein 1 (1049 aa).

T332, T369, and T385 each carry phosphothreonine. The domain A stretch occupies residues T385–K584. Positions T385–Y944 are pocket; binds T and E1A. Positions V585 to S779 are spacer. Phosphoserine is present on residues S640, S650, S748, and S761. The domain B stretch occupies residues K780–Y944. Residues S959, S970, and S983 each carry the phosphoserine modification. Residue T992 is modified to Phosphothreonine. A phosphoserine mark is found at S1004 and S1022.

It belongs to the retinoblastoma protein (RB) family. In terms of assembly, component of the DREAM complex (also named LINC complex) at least composed of E2F4, E2F5, LIN9, LIN37, LIN52, LIN54, MYBL1, MYBL2, RBL1, RBL2, RBBP4, TFDP1 and TFDP2. The complex exists in quiescent cells where it represses cell cycle-dependent genes. It dissociates in S phase when LIN9, LIN37, LIN52 and LIN54 form a subcomplex that binds to MYBL2. Interacts with AATF. Interacts with KDM5A. Interacts with KMT5B and KMT5C. Interacts with USP4. Interacts with RBBP9. Cell-cycle arrest properties are inactivated by phosphorylation on Thr-332, Ser-640, Ser-959 and Ser-970 by CDK4.

The protein resides in the nucleus. Key regulator of entry into cell division. Directly involved in heterochromatin formation by maintaining overall chromatin structure and, in particular, that of constitutive heterochromatin by stabilizing histone methylation. Recruits and targets histone methyltransferases KMT5B and KMT5C, leading to epigenetic transcriptional repression. Controls histone H4 'Lys-20' trimethylation. Probably acts as a transcription repressor by recruiting chromatin-modifying enzymes to promoters. Potent inhibitor of E2F-mediated trans-activation. May act as a tumor suppressor. This chain is Retinoblastoma-like protein 1, found in Rattus norvegicus (Rat).